We begin with the raw amino-acid sequence, 1049 residues long: MKCYNPSAFVPMAVTLVTVIIYLGVFIPLLIIQETVPSAPDDPTLYNGLNLTEAWLDLQSLSDGYHPFNSRKNDDVRNWLLKRIGEILDHNQIQYSTETESATISETQIKSDFDAEAPESVPSPSNSNDGSAERYHEDLRARKESPAVTVFNDLRSNYSSNALTSIGVKGRKLGISTYFEGNNIICYVRGSDDEEGEWWKTGSVNSKGKVHGKGGVMVNAHFDSVSTGFGATDDGVGVVTALQLIRYFTTPQNVPQKGFVALFNNGEEDGLYGAKAFLSHPMARFVHTFLNLEGAGAGGRATLFRSTDSEVTRAYAHAKHPFGTVVSSDGFSLGYVRSETDYVVFRAEGYRGLDVAFWQPRSQYHTDQDDAKHTSIDSLWHMLSASVATTRSLTKDTGNTFLGPRGDDKVGKVSNGKGSDGVWFDIFGTVFAVFKLRTLFAWSLTLLIAAPLMLFAVSYLLNRQDKFYFFAGSIKAKGPEDEPISLGGWRGAFRYPITLIITCAITFGCASLINKINPMIVYSSPYSVWSMSASLFFSIFWFIMAGCNFVRPSALQRGYAFMWLFVFGWIILVAATVYEDRFKISGGYLFVFYEAAIFLATLIAIGEQFALPKKSTYVENSQLDHDGNQDSHHQAVMGTDGANGADEANASNEAGQEEDPEDNVNDLAVPHETTPLIGGGAPTQRSSISTTFANRYRQVVPESYDGPADHHDKKGHKKHPYGGEQDWSAKLPIWTWLVQYLLVGPFILIVVGQVGLFLVAALHQTGTDGSPLLLPYLVVAVFSILLLLPVTPFIHRLTHHMPTFFFLVFIGTLIYNLVAFPFSPNNRYKAYFQQTVDLDTGLNKVTIVGIEQYIREIIAYIPSAAGQTINCEENPRIRSGLSFCSYEGIAPRVVDNVVDGIPPEKGYTDWLTYNVTRVPNENKATFHISGLETRACILRFDDPFSEFKVHGGAKTEERWDDVPDSGSDQIKLWSRDWNKEWKVDVEWAVGEDMKPGEEGRTGRVVCLWSDANERGVIPALDEARRFSPDWTSVVKLMDGLVEGSKRFVV.

At 1-11 the chain is on the cytoplasmic side; the sequence is MKCYNPSAFVP. The chain crosses the membrane as a helical span at residues 12-32; sequence MAVTLVTVIIYLGVFIPLLII. Topologically, residues 33–438 are vacuolar; it reads QETVPSAPDD…TVFAVFKLRT (406 aa). N-linked (GlcNAc...) asparagine glycosylation occurs at asparagine 50. Positions 114-135 are disordered; that stretch reads DAEAPESVPSPSNSNDGSAERY. An N-linked (GlcNAc...) asparagine glycan is attached at asparagine 157. Zn(2+) contacts are provided by histidine 221 and aspartate 233. The Proton acceptor role is filled by glutamate 267. Zn(2+) contacts are provided by glutamate 268, glutamate 293, and histidine 365. The helical transmembrane segment at 439-459 threads the bilayer; the sequence is LFAWSLTLLIAAPLMLFAVSY. Topologically, residues 460 to 495 are cytoplasmic; the sequence is LLNRQDKFYFFAGSIKAKGPEDEPISLGGWRGAFRY. Residues 496 to 516 traverse the membrane as a helical segment; that stretch reads PITLIITCAITFGCASLINKI. At 517-526 the chain is on the vacuolar side; it reads NPMIVYSSPY. Residues 527–547 traverse the membrane as a helical segment; the sequence is SVWSMSASLFFSIFWFIMAGC. Residues 548-557 are Cytoplasmic-facing; it reads NFVRPSALQR. Residues 558–578 traverse the membrane as a helical segment; the sequence is GYAFMWLFVFGWIILVAATVY. The Vacuolar segment spans residues 579–585; the sequence is EDRFKIS. A helical transmembrane segment spans residues 586–606; it reads GGYLFVFYEAAIFLATLIAIG. Over 607–740 the chain is Cytoplasmic; it reads EQFALPKKST…LPIWTWLVQY (134 aa). Residues 621–686 are disordered; that stretch reads SQLDHDGNQD…IGGGAPTQRS (66 aa). Residues 622–633 are compositionally biased toward basic and acidic residues; that stretch reads QLDHDGNQDSHH. Acidic residues predominate over residues 655-664; that stretch reads GQEEDPEDNV. Residues 741–761 traverse the membrane as a helical segment; that stretch reads LLVGPFILIVVGQVGLFLVAA. The Vacuolar segment spans residues 762 to 773; that stretch reads LHQTGTDGSPLL. A helical transmembrane segment spans residues 774–794; the sequence is LPYLVVAVFSILLLLPVTPFI. Residues 795 to 801 are Cytoplasmic-facing; it reads HRLTHHM. A helical membrane pass occupies residues 802–822; the sequence is PTFFFLVFIGTLIYNLVAFPF. The Vacuolar portion of the chain corresponds to 823–1049; sequence SPNNRYKAYF…LVEGSKRFVV (227 aa). Residue asparagine 914 is glycosylated (N-linked (GlcNAc...) asparagine).

The protein belongs to the peptidase M28 family. Zn(2+) is required as a cofactor.

It localises to the vacuole membrane. Its function is as follows. May be involved in vacuolar sorting and osmoregulation. The sequence is that of Vacuolar membrane protease from Botryotinia fuckeliana (strain B05.10) (Noble rot fungus).